The following is a 415-amino-acid chain: Gamma-glutamyl phosphate reductase (415 aa).

It belongs to the gamma-glutamyl phosphate reductase family.

The protein localises to the cytoplasm. It catalyses the reaction L-glutamate 5-semialdehyde + phosphate + NADP(+) = L-glutamyl 5-phosphate + NADPH + H(+). Its pathway is amino-acid biosynthesis; L-proline biosynthesis; L-glutamate 5-semialdehyde from L-glutamate: step 2/2. Its function is as follows. Catalyzes the NADPH-dependent reduction of L-glutamate 5-phosphate into L-glutamate 5-semialdehyde and phosphate. The product spontaneously undergoes cyclization to form 1-pyrroline-5-carboxylate. The polypeptide is Gamma-glutamyl phosphate reductase (Bacillus cereus (strain AH187)).